The primary structure comprises 378 residues: Mas-related G-protein coupled receptor MRG (378 aa).

Residues methionine 1 to isoleucine 77 are Extracellular-facing. Residues asparagine 54 and asparagine 57 are each glycosylated (N-linked (GlcNAc...) asparagine). Residues isoleucine 78–cysteine 101 form a helical membrane-spanning segment. Residues cysteine 102–methionine 109 are Cytoplasmic-facing. Residues valine 110–leucine 136 traverse the membrane as a helical segment. Residues threonine 137–proline 154 lie on the Extracellular side of the membrane. The chain crosses the membrane as a helical span at residues phenylalanine 155–threonine 169. Over glutamate 170–asparagine 191 the chain is Cytoplasmic. The helical transmembrane segment at valine 192–valine 207 threads the bilayer. Residues lysine 208–cysteine 221 are Extracellular-facing. The chain crosses the membrane as a helical span at residues valine 222–isoleucine 248. The Cytoplasmic portion of the chain corresponds to arginine 249–alanine 264. The helical transmembrane segment at valine 265–isoleucine 286 threads the bilayer. Over threonine 287–tyrosine 297 the chain is Extracellular. A helical membrane pass occupies residues leucine 298–valine 317. Residues glycine 318–threonine 378 lie on the Cytoplasmic side of the membrane. Residues glycine 344–threonine 378 are disordered. Positions leucine 368–threonine 378 are enriched in basic and acidic residues.

It belongs to the G-protein coupled receptor 1 family. Mas subfamily.

It is found in the cell membrane. The polypeptide is Mas-related G-protein coupled receptor MRG (MAS1L) (Homo sapiens (Human)).